The following is a 746-amino-acid chain: Exostosin-1 (746 aa).

Residues 1–7 are Cytoplasmic-facing; it reads MQAKKRY. Residues 8-28 traverse the membrane as a helical; Signal-anchor for type II membrane protein segment; the sequence is FILLSAGSCLALLFYFGGVQF. Residues 29–746 lie on the Lumenal side of the membrane; that stretch reads RASRSHSRRE…RKKYRDIERL (718 aa). N-linked (GlcNAc...) asparagine glycosylation occurs at N89. Disulfide bonds link C98/C103 and C109/C152. A protein-binding residues include L166 and Y203. 4 residues coordinate UDP: K267, K269, Y271, and R280. C298 and C312 are joined by a disulfide. H300 contributes to the a protein binding site. Residues Y319 and Y324 each coordinate UDP. The N-linked (GlcNAc...) asparagine glycan is linked to N330. Disulfide bonds link C334–C355 and C652–C704. R346 and E349 together coordinate UDP.

The protein belongs to the glycosyltransferase 47 family. Part of the heparan sulfate polymerase, a dimeric complex composed of EXT1 and EXT2. Could also form homooligomeric complexes. Interacts with NDST1. In terms of processing, N-glycosylated.

It is found in the golgi apparatus membrane. It localises to the golgi apparatus. The protein resides in the cis-Golgi network membrane. Its subcellular location is the endoplasmic reticulum membrane. It catalyses the reaction 3-O-{alpha-D-GlcNAc-[(1-&gt;4)-beta-D-GlcA-(1-&gt;4)-alpha-D-GlcNAc](n)-(1-&gt;4)-beta-D-GlcA-(1-&gt;3)-beta-D-Gal-(1-&gt;3)-beta-D-Gal-(1-&gt;4)-beta-D-Xyl}-L-seryl-[protein] + UDP-alpha-D-glucuronate = 3-O-{[(1-&gt;4)-beta-D-GlcA-(1-&gt;4)-alpha-D-GlcNAc](n+1)-(1-&gt;4)-beta-D-GlcA-(1-&gt;3)-beta-D-Gal-(1-&gt;3)-beta-D-Gal-(1-&gt;4)-beta-D-Xyl}-L-seryl-[protein] + UDP + H(+). The protein operates within protein modification; protein glycosylation. Glycosyltransferase forming with EXT2 the heterodimeric heparan sulfate polymerase which catalyzes the elongation of the heparan sulfate glycan backbone. Glycan backbone extension consists in the alternating transfer of (1-&gt;4)-beta-D-GlcA and (1-&gt;4)-alpha-D-GlcNAc residues from their respective UDP-sugar donors. Both EXT1 and EXT2 are required for the full activity of the polymerase since EXT1 bears the N-acetylglucosaminyl-proteoglycan 4-beta-glucuronosyltransferase activity within the complex while EXT2 carries the glucuronosyl-N-acetylglucosaminyl-proteoglycan 4-alpha-N-acetylglucosaminyltransferase activity. Heparan sulfate proteoglycans are ubiquitous components of the extracellular matrix and play an important role in tissue homeostasis and signaling. The protein is Exostosin-1 of Mus musculus (Mouse).